Consider the following 446-residue polypeptide: Long-chain fatty acid transport protein (446 aa).

The N-terminal stretch at 1–25 (MSQKTLFTKSALAVAVALISTQAWS) is a signal peptide.

Belongs to the OmpP1/FadL family. In terms of assembly, has been isolated from outer membrane preparation as a homodimer.

It localises to the cell outer membrane. Functionally, involved in translocation of long-chain fatty acids across the outer membrane. It is a receptor for the bacteriophage T2. FadL may form a specific channel. The polypeptide is Long-chain fatty acid transport protein (fadL) (Escherichia coli (strain K12)).